The sequence spans 291 residues: Alpha-soluble NSF attachment protein (291 aa).

4 TPR repeats span residues 14–51 (ADKR…FKMS), 77–110 (AASS…YTDE), 117–150 (AKHQ…FDGE), and 157–190 (HQCL…SLDN).

Belongs to the SNAP family. Interacts with nsfA and probably SNARE proteins.

The protein localises to the cytoplasmic vesicle membrane. May be required for vesicular transport between the endoplasmic reticulum and the Golgi apparatus. Involved in vesicle fusion with nsfA and probably SNARE proteins. This Dictyostelium discoideum (Social amoeba) protein is Alpha-soluble NSF attachment protein (snpA).